The primary structure comprises 107 residues: Heme-degrading monooxygenase (107 aa).

The region spanning 2–94 is the ABM domain; it reads IIVTNTAKIT…YILDNKITYY (93 aa). Residue asparagine 6 coordinates Fe cation. Histidine 76 contributes to the heme binding site.

It belongs to the antibiotic biosynthesis monooxygenase family. Heme-degrading monooxygenase IsdG subfamily. In terms of assembly, homodimer.

The protein resides in the cytoplasm. It carries out the reaction heme b + 3 reduced [NADPH--hemoprotein reductase] + 3 O2 = biliverdin IXalpha + CO + Fe(2+) + 3 oxidized [NADPH--hemoprotein reductase] + 3 H2O + H(+). In terms of biological role, allows bacterial pathogens to use the host heme as an iron source. Catalyzes the oxidative degradation of the heme macrocyclic porphyrin ring to the biliverdin in the presence of a suitable electron donor such as ascorbate or NADPH--cytochrome P450 reductase, with subsequent release of free iron. The polypeptide is Heme-degrading monooxygenase (Bacillus thuringiensis subsp. konkukian (strain 97-27)).